The following is a 198-amino-acid chain: Recombination protein RecR (198 aa).

A C4-type zinc finger spans residues 57–72 (CSVCGNLTDDDPCLIC). Positions 80-175 (SVILVVEDSK…KVTRLARGLA (96 aa)) constitute a Toprim domain.

This sequence belongs to the RecR family.

Functionally, may play a role in DNA repair. It seems to be involved in an RecBC-independent recombinational process of DNA repair. It may act with RecF and RecO. In Streptococcus agalactiae serotype Ia (strain ATCC 27591 / A909 / CDC SS700), this protein is Recombination protein RecR.